A 273-amino-acid chain; its full sequence is Pantothenate synthetase (273 aa).

27 to 34 (MGALHNGH) is a binding site for ATP. His34 acts as the Proton donor in catalysis. A (R)-pantoate-binding site is contributed by Gln58. Gln58 contributes to the beta-alanine binding site. 144-147 (GKKD) contacts ATP. Gln150 contacts (R)-pantoate. ATP-binding positions include Val173 and 181 to 184 (LSSR).

It belongs to the pantothenate synthetase family. In terms of assembly, homodimer.

It is found in the cytoplasm. The catalysed reaction is (R)-pantoate + beta-alanine + ATP = (R)-pantothenate + AMP + diphosphate + H(+). It functions in the pathway cofactor biosynthesis; (R)-pantothenate biosynthesis; (R)-pantothenate from (R)-pantoate and beta-alanine: step 1/1. Functionally, catalyzes the condensation of pantoate with beta-alanine in an ATP-dependent reaction via a pantoyl-adenylate intermediate. This Campylobacter fetus subsp. fetus (strain 82-40) protein is Pantothenate synthetase.